Reading from the N-terminus, the 109-residue chain is Nucleoid-associated protein HS_1309 (109 aa).

It belongs to the YbaB/EbfC family. Homodimer.

The protein localises to the cytoplasm. The protein resides in the nucleoid. Its function is as follows. Binds to DNA and alters its conformation. May be involved in regulation of gene expression, nucleoid organization and DNA protection. The chain is Nucleoid-associated protein HS_1309 from Histophilus somni (strain 129Pt) (Haemophilus somnus).